Reading from the N-terminus, the 199-residue chain is Thymidine kinase (199 aa).

Residues 9–16 (GAMSSGKT) and 93–96 (DEAQ) each bind ATP. The active-site Proton acceptor is the E94. 4 residues coordinate Zn(2+): C151, C154, C188, and H191.

Belongs to the thymidine kinase family. As to quaternary structure, homotetramer.

It localises to the cytoplasm. The enzyme catalyses thymidine + ATP = dTMP + ADP + H(+). In Lactobacillus acidophilus (strain ATCC 700396 / NCK56 / N2 / NCFM), this protein is Thymidine kinase.